Consider the following 166-residue polypeptide: Large ribosomal subunit protein uL10 (166 aa).

This sequence belongs to the universal ribosomal protein uL10 family. As to quaternary structure, part of the ribosomal stalk of the 50S ribosomal subunit. The N-terminus interacts with L11 and the large rRNA to form the base of the stalk. The C-terminus forms an elongated spine to which L12 dimers bind in a sequential fashion forming a multimeric L10(L12)X complex.

Functionally, forms part of the ribosomal stalk, playing a central role in the interaction of the ribosome with GTP-bound translation factors. This Streptococcus pyogenes serotype M28 (strain MGAS6180) protein is Large ribosomal subunit protein uL10.